Consider the following 159-residue polypeptide: G-protein-signaling modulator 3 (159 aa).

The segment at 1-54 is disordered; the sequence is MEAERPQEEDGEQSLPQDDQGWPPVNATARPWRSAPPSPPPPGTRHTALGPRSG. Phosphoserine occurs at positions 34, 38, 55, and 58. The segment covering 34-43 has biased composition (pro residues); that stretch reads SAPPSPPPPG. Thr-61 is modified (phosphothreonine). Positions 61-83 constitute a GoLoco 1 domain; sequence TELLLDLVAEAQSRRLEEQRATF. The disordered stretch occupies residues 77–97; that stretch reads EEQRATFHTPEAPPNLAPAPP. Residues 87 to 97 are compositionally biased toward pro residues; that stretch reads EAPPNLAPAPP. 2 GoLoco domains span residues 103–125 and 131–154; these read KEQL…RSDP and GQEL…RSRP.

The protein localises to the cytoplasm. Its function is as follows. Interacts with subunit of G(i) alpha proteins and regulates the activation of G(i) alpha proteins. The sequence is that of G-protein-signaling modulator 3 (Gpsm3) from Mus musculus (Mouse).